We begin with the raw amino-acid sequence, 273 residues long: 1,4-dihydroxy-2-naphthoyl-CoA synthase (273 aa).

Substrate is bound by residues arginine 34, 73–77, tyrosine 85, 117–121, threonine 143, serine 149, tyrosine 246, and lysine 261; these read SGGDQ and YAVGG. 142–144 contacts hydrogencarbonate; the sequence is QTG. Residues 254-265 are compositionally biased toward basic and acidic residues; the sequence is GRDAFKEKRDPD. Positions 254 to 273 are disordered; it reads GRDAFKEKRDPDFDQFPKFP.

The protein belongs to the enoyl-CoA hydratase/isomerase family. MenB subfamily. Hydrogencarbonate is required as a cofactor.

It catalyses the reaction 2-succinylbenzoyl-CoA + H(+) = 1,4-dihydroxy-2-naphthoyl-CoA + H2O. It functions in the pathway quinol/quinone metabolism; 1,4-dihydroxy-2-naphthoate biosynthesis; 1,4-dihydroxy-2-naphthoate from chorismate: step 6/7. The protein operates within quinol/quinone metabolism; menaquinone biosynthesis. Its function is as follows. Converts o-succinylbenzoyl-CoA (OSB-CoA) to 1,4-dihydroxy-2-naphthoyl-CoA (DHNA-CoA). The protein is 1,4-dihydroxy-2-naphthoyl-CoA synthase of Staphylococcus aureus (strain Mu50 / ATCC 700699).